The following is a 561-amino-acid chain: Asparagine synthetase [glutamine-hydrolyzing] (561 aa).

C2 functions as the For GATase activity in the catalytic mechanism. Residues 2–191 enclose the Glutamine amidotransferase type-2 domain; sequence CGIWALFGSD…PGHYEVLDLK (190 aa). L-glutamine contacts are provided by residues 49–53, 75–77, and D97; these read RLAVV and NGE. The 324-residue stretch at 213 to 536 folds into the Asparagine synthetase domain; the sequence is HAACDTVGNL…PGRSSWLPHY (324 aa). Residues L256, I288, and 363–364 contribute to the ATP site; that span reads SG.

The catalysed reaction is L-aspartate + L-glutamine + ATP + H2O = L-asparagine + L-glutamate + AMP + diphosphate + H(+). The protein operates within amino-acid biosynthesis; L-asparagine biosynthesis; L-asparagine from L-aspartate (L-Gln route): step 1/1. The polypeptide is Asparagine synthetase [glutamine-hydrolyzing] (ASNS) (Gallus gallus (Chicken)).